Here is a 33-residue protein sequence, read N- to C-terminus: Cytochrome b6-f complex subunit 6 (33 aa).

Residues 4-24 (ITIISYFGFLLASIIFTLVLF) form a helical membrane-spanning segment.

This sequence belongs to the PetL family. In terms of assembly, the 4 large subunits of the cytochrome b6-f complex are cytochrome b6, subunit IV (17 kDa polypeptide, PetD), cytochrome f and the Rieske protein, while the 4 small subunits are PetG, PetL, PetM and PetN. The complex functions as a dimer.

The protein resides in the plastid. It localises to the chloroplast thylakoid membrane. In terms of biological role, component of the cytochrome b6-f complex, which mediates electron transfer between photosystem II (PSII) and photosystem I (PSI), cyclic electron flow around PSI, and state transitions. PetL is important for photoautotrophic growth as well as for electron transfer efficiency and stability of the cytochrome b6-f complex. The sequence is that of Cytochrome b6-f complex subunit 6 from Pinus thunbergii (Japanese black pine).